The sequence spans 169 residues: Ribosome maturation factor RimM (169 aa).

In terms of domain architecture, PRC barrel spans Pro-95–Phe-168.

The protein belongs to the RimM family. In terms of assembly, binds ribosomal protein uS19.

The protein resides in the cytoplasm. In terms of biological role, an accessory protein needed during the final step in the assembly of 30S ribosomal subunit, possibly for assembly of the head region. Essential for efficient processing of 16S rRNA. May be needed both before and after RbfA during the maturation of 16S rRNA. It has affinity for free ribosomal 30S subunits but not for 70S ribosomes. The sequence is that of Ribosome maturation factor RimM from Prosthecochloris aestuarii (strain DSM 271 / SK 413).